Here is a 468-residue protein sequence, read N- to C-terminus: Pentatricopeptide repeat-containing protein At5g46680 (468 aa).

12 PPR repeats span residues 12–46 (STKL…GVLP), 47–81 (DVIT…GIEP), 82–116 (DVTT…GLSP), 117–152 (DMWS…GLVP), 153–183 (GIDT…LKSR), 187–221 (ELMT…GYTP), 222–256 (NAVT…GYTF), 257–291 (DGFA…GTRS), 293–327 (DIVS…GLKP), 328–362 (DDYT…GMQP), 363–393 (SVVT…MEVR), and 394–428 (DEFT…GMKI).

This sequence belongs to the PPR family. P subfamily.

This is Pentatricopeptide repeat-containing protein At5g46680 from Arabidopsis thaliana (Mouse-ear cress).